The chain runs to 216 residues: Thiamine-phosphate synthase (216 aa).

4-amino-2-methyl-5-(diphosphooxymethyl)pyrimidine-binding positions include 35 to 39 (QLRDK) and N67. Mg(2+) is bound by residues D68 and D87. S106 provides a ligand contact to 4-amino-2-methyl-5-(diphosphooxymethyl)pyrimidine. 132–134 (TSS) is a binding site for 2-[(2R,5Z)-2-carboxy-4-methylthiazol-5(2H)-ylidene]ethyl phosphate. K135 is a 4-amino-2-methyl-5-(diphosphooxymethyl)pyrimidine binding site. Residues G163 and 183-184 (IS) each bind 2-[(2R,5Z)-2-carboxy-4-methylthiazol-5(2H)-ylidene]ethyl phosphate.

This sequence belongs to the thiamine-phosphate synthase family. Mg(2+) is required as a cofactor.

It catalyses the reaction 2-[(2R,5Z)-2-carboxy-4-methylthiazol-5(2H)-ylidene]ethyl phosphate + 4-amino-2-methyl-5-(diphosphooxymethyl)pyrimidine + 2 H(+) = thiamine phosphate + CO2 + diphosphate. The enzyme catalyses 2-(2-carboxy-4-methylthiazol-5-yl)ethyl phosphate + 4-amino-2-methyl-5-(diphosphooxymethyl)pyrimidine + 2 H(+) = thiamine phosphate + CO2 + diphosphate. It carries out the reaction 4-methyl-5-(2-phosphooxyethyl)-thiazole + 4-amino-2-methyl-5-(diphosphooxymethyl)pyrimidine + H(+) = thiamine phosphate + diphosphate. Its pathway is cofactor biosynthesis; thiamine diphosphate biosynthesis; thiamine phosphate from 4-amino-2-methyl-5-diphosphomethylpyrimidine and 4-methyl-5-(2-phosphoethyl)-thiazole: step 1/1. Functionally, condenses 4-methyl-5-(beta-hydroxyethyl)thiazole monophosphate (THZ-P) and 2-methyl-4-amino-5-hydroxymethyl pyrimidine pyrophosphate (HMP-PP) to form thiamine monophosphate (TMP). This is Thiamine-phosphate synthase from Methanoregula boonei (strain DSM 21154 / JCM 14090 / 6A8).